Reading from the N-terminus, the 208-residue chain is 3-demethoxyubiquinol 3-hydroxylase (208 aa).

Residues Glu-57, Glu-87, His-90, Glu-139, Glu-171, and His-174 each coordinate Fe cation.

The protein belongs to the COQ7 family. The cofactor is Fe cation.

The protein localises to the cell membrane. It carries out the reaction a 5-methoxy-2-methyl-3-(all-trans-polyprenyl)benzene-1,4-diol + AH2 + O2 = a 3-demethylubiquinol + A + H2O. It participates in cofactor biosynthesis; ubiquinone biosynthesis. Its function is as follows. Catalyzes the hydroxylation of 2-nonaprenyl-3-methyl-6-methoxy-1,4-benzoquinol during ubiquinone biosynthesis. This chain is 3-demethoxyubiquinol 3-hydroxylase, found in Nitrosomonas europaea (strain ATCC 19718 / CIP 103999 / KCTC 2705 / NBRC 14298).